A 474-amino-acid chain; its full sequence is MKEYQTITEISGPLVYAEVDEAIGYDEIVEIETAQGETLRGQVLESSEGVVAIQVFEGTSGIDQNASVRFLGETMKMPVTEDLLGRVLDGSGRPIDDGPEIVPEERQDIVGAAINPYSREYPEEFIETGVSAIDGMNTLVRGQKLPIFSSSGQPHSQLAMQIARQASVPEEEEGGDDEEGSEFAVIFGAMGITAEEANEFMQDFERTGALERSVVFMNLADDPAVERTVTPRMVLTTAEYLAFEKDYHVLVILTDMTNYCEALREIGAAREEVPGRRGYPGYMYTDLAQLYERAGRIQGRDGSVTQIPILTMPGDDDTHPIPDLTGYITEGQIYVDPDLNSQGLQPPINVLPSLSRLMDDGIGEGLTREDHADVKDQMFAAYAEGEDLRDLVNIVGREALSELDNKYLDFADDFESEFVDQGFDQNRSIEETLEIGWDLLSMLPKDALNRIDEEFIEKYYREDDSDRQVVEAAD.

This sequence belongs to the ATPase alpha/beta chains family. In terms of assembly, has multiple subunits with at least A(3), B(3), C, D, E, F, H, I and proteolipid K(x).

Its subcellular location is the cell membrane. In terms of biological role, component of the A-type ATP synthase that produces ATP from ADP in the presence of a proton gradient across the membrane. The B chain is a regulatory subunit. In Halorubrum lacusprofundi (strain ATCC 49239 / DSM 5036 / JCM 8891 / ACAM 34), this protein is A-type ATP synthase subunit B.